A 197-amino-acid chain; its full sequence is Probable chorismate pyruvate-lyase (197 aa).

Residues Arg66, Leu104, and Glu169 each contribute to the substrate site.

Belongs to the UbiC family.

The protein resides in the cytoplasm. It catalyses the reaction chorismate = 4-hydroxybenzoate + pyruvate. It participates in cofactor biosynthesis; ubiquinone biosynthesis. Removes the pyruvyl group from chorismate, with concomitant aromatization of the ring, to provide 4-hydroxybenzoate (4HB) for the ubiquinone pathway. This Albidiferax ferrireducens (strain ATCC BAA-621 / DSM 15236 / T118) (Rhodoferax ferrireducens) protein is Probable chorismate pyruvate-lyase.